Consider the following 297-residue polypeptide: 3-methyl-2-oxobutanoate hydroxymethyltransferase (297 aa).

The segment covering 1–12 (MSEQISEQSEQN) has biased composition (polar residues). A disordered region spans residues 1-36 (MSEQISEQSEQNVYGACPPVPAGESSPSAASAPRTK). Low complexity predominate over residues 22-33 (AGESSPSAASAP). Mg(2+)-binding residues include aspartate 78 and aspartate 117. 3-methyl-2-oxobutanoate is bound by residues 78–79 (DS), aspartate 117, and lysine 147. Position 149 (glutamate 149) interacts with Mg(2+). The Proton acceptor role is filled by glutamate 215.

This sequence belongs to the PanB family. In terms of assembly, homodecamer; pentamer of dimers. The cofactor is Mg(2+).

The protein localises to the cytoplasm. The catalysed reaction is 3-methyl-2-oxobutanoate + (6R)-5,10-methylene-5,6,7,8-tetrahydrofolate + H2O = 2-dehydropantoate + (6S)-5,6,7,8-tetrahydrofolate. Its pathway is cofactor biosynthesis; (R)-pantothenate biosynthesis; (R)-pantoate from 3-methyl-2-oxobutanoate: step 1/2. Catalyzes the reversible reaction in which hydroxymethyl group from 5,10-methylenetetrahydrofolate is transferred onto alpha-ketoisovalerate to form ketopantoate. In Mycobacterium ulcerans (strain Agy99), this protein is 3-methyl-2-oxobutanoate hydroxymethyltransferase.